The following is a 127-amino-acid chain: Holo-[acyl-carrier-protein] synthase (127 aa).

Asp9 and Glu58 together coordinate Mg(2+).

The protein belongs to the P-Pant transferase superfamily. AcpS family. The cofactor is Mg(2+).

Its subcellular location is the cytoplasm. It catalyses the reaction apo-[ACP] + CoA = holo-[ACP] + adenosine 3',5'-bisphosphate + H(+). In terms of biological role, transfers the 4'-phosphopantetheine moiety from coenzyme A to a Ser of acyl-carrier-protein. The protein is Holo-[acyl-carrier-protein] synthase of Shewanella baltica (strain OS155 / ATCC BAA-1091).